Here is a 167-residue protein sequence, read N- to C-terminus: NADPH-dependent 7-cyano-7-deazaguanine reductase (167 aa).

The interval 1–24 is disordered; the sequence is MTTRSQDQTRDLKVLGTGRLTSPE. Cys-57 acts as the Thioimide intermediate in catalysis. The Proton donor role is filled by Asp-64. Residues 79-81 and 98-99 each bind substrate; these read VES and ME.

It belongs to the GTP cyclohydrolase I family. QueF type 1 subfamily.

It localises to the cytoplasm. It catalyses the reaction 7-aminomethyl-7-carbaguanine + 2 NADP(+) = 7-cyano-7-deazaguanine + 2 NADPH + 3 H(+). Its pathway is tRNA modification; tRNA-queuosine biosynthesis. In terms of biological role, catalyzes the NADPH-dependent reduction of 7-cyano-7-deazaguanine (preQ0) to 7-aminomethyl-7-deazaguanine (preQ1). The sequence is that of NADPH-dependent 7-cyano-7-deazaguanine reductase from Desulfovibrio desulfuricans (strain ATCC 27774 / DSM 6949 / MB).